A 317-amino-acid chain; its full sequence is Cytochrome c biogenesis protein CcsA (317 aa).

The next 8 helical transmembrane spans lie at V17–L37, G44–G64, L71–L91, I101–I121, M143–I163, I223–N243, W252–I272, and A284–L304.

Belongs to the CcmF/CycK/Ccl1/NrfE/CcsA family. In terms of assembly, may interact with Ccs1.

The protein resides in the plastid. Its subcellular location is the chloroplast thylakoid membrane. Its function is as follows. Required during biogenesis of c-type cytochromes (cytochrome c6 and cytochrome f) at the step of heme attachment. The polypeptide is Cytochrome c biogenesis protein CcsA (Pelargonium hortorum (Common geranium)).